The sequence spans 367 residues: Beta sliding clamp (367 aa).

It belongs to the beta sliding clamp family. As to quaternary structure, forms a ring-shaped head-to-tail homodimer around DNA which binds and tethers DNA polymerases and other proteins to the DNA. The DNA replisome complex has a single clamp-loading complex (3 tau and 1 each of delta, delta', psi and chi subunits) which binds 3 Pol III cores (1 core on the leading strand and 2 on the lagging strand) each with a beta sliding clamp dimer. Additional proteins in the replisome are other copies of gamma, psi and chi, Ssb, DNA helicase and RNA primase.

It localises to the cytoplasm. Its function is as follows. Confers DNA tethering and processivity to DNA polymerases and other proteins. Acts as a clamp, forming a ring around DNA (a reaction catalyzed by the clamp-loading complex) which diffuses in an ATP-independent manner freely and bidirectionally along dsDNA. Initially characterized for its ability to contact the catalytic subunit of DNA polymerase III (Pol III), a complex, multichain enzyme responsible for most of the replicative synthesis in bacteria; Pol III exhibits 3'-5' exonuclease proofreading activity. The beta chain is required for initiation of replication as well as for processivity of DNA replication. This Pseudomonas putida (strain ATCC 47054 / DSM 6125 / CFBP 8728 / NCIMB 11950 / KT2440) protein is Beta sliding clamp (dnaN).